We begin with the raw amino-acid sequence, 355 residues long: MHC class I-like protein MILL2 (355 aa).

Residues 1–29 form the signal peptide; that stretch reads MKASSGKPREFRPAVLLLILGLLLRDSRG. An alpha-1 region spans residues 46-137; that stretch reads RLTRTHTLRY…VINQKSQEEG (92 aa). Disulfide bonds link Cys96–Cys107, Cys147–Cys210, and Cys249–Cys306. Asn104 and Asn152 each carry an N-linked (GlcNAc...) asparagine glycan. An alpha-2 region spans residues 138-229; that stretch reads LHTLQATLGC…SLRNGLQDTG (92 aa). Residues 230 to 323 are alpha-3; the sequence is PPMVTVTCRN…SIMQTAVSGH (94 aa). The 91-residue stretch at 231–321 folds into the Ig-like C1-type domain; the sequence is PMVTVTCRNY…NHSIMQTAVS (91 aa). Asn312 carries an N-linked (GlcNAc...) asparagine glycan. Residues 324–329 are connecting peptide; that stretch reads AAEDSQ. Residue Asp330 is the site of GPI-anchor amidated aspartate attachment. A propeptide spans 331-355 (removed in mature form); it reads VASSATASAGSALPVVLAVALARAN.

It belongs to the MHC class I family. As to quaternary structure, heterodimer with B2M (beta-2-microglobulin). Post-translationally, N-glycosylated. As to expression, ubiquitously expressed in neonatal and adult tissues.

It is found in the cell membrane. Its function is as follows. Binds to heparan sulfate proteoglycans on the surface of fibroblast (NIH-3T3) cells. The chain is MHC class I-like protein MILL2 from Mus musculus (Mouse).